The primary structure comprises 348 residues: MASGEDGPRSCMVCGDRATGYHFHALTCEGCKGFFRRTVSKNTGLTCPFAGSCKVNKAQRRHCPACRLQKCLDAGMKKEMILSAEALAQRRAKQAQRRAQWAAVQLSKGQQELVQTLLGAHARHVGTMFDQFVQFRPPAHLFIHHQRLPIPLPPLPLLEHFAEVNTFMVQQVIKFTKDLPLFRSLPMEDQISLLKGAAVEICHIALNTTFCLQTRNFLCGPLRYTLEDGVHVGFQEEFLELLFRFHATLRRFQLQEPEYVLMAAMALFSPDRPGVTQKEEIDRLQEMMALTLQSYIKGQPPRHRDRFLYAKLLGLLAELRSINNAYGYQIQHIQGLSAMMPLLQEICS.

A DNA-binding region (nuclear receptor) is located at residues 8 to 83; the sequence is PRSCMVCGDR…AGMKKEMILS (76 aa). The NR C4-type zinc finger occupies 11 to 31; sequence CMVCGDRATGYHFHALTCEGC. T38 carries the post-translational modification Phosphothreonine; by PKC. Residues 47–71 form an NR C4-type zinc finger; sequence CPFAGSCKVNKAQRRHCPACRLQKC. The NR LBD domain maps to 109 to 348; sequence GQQELVQTLL…MMPLLQEICS (240 aa).

It belongs to the nuclear hormone receptor family. NR1 subfamily. As to quaternary structure, heterodimer of NR1I3 and RXR. Interacts with PSMC4. Interacts with ECT2. Directly interacts with DNAJC7; this complex may also include HSP90. Interacts with CRY1. Interacts with CRY2 in a ligand-dependent manner. Post-translationally, phosphorylated at Thr-38 by PKC, dephosphorylation of Thr-38 is required for nuclear translocation and activation.

The protein resides in the nucleus. It localises to the cytoplasm. Its subcellular location is the cytoskeleton. In terms of biological role, binds and transactivates the retinoic acid response elements that control expression of the retinoic acid receptor beta 2 and alcohol dehydrogenase 3 genes. Transactivates both the phenobarbital responsive element module of the human CYP2B6 gene and the CYP3A4 xenobiotic response element. The polypeptide is Nuclear receptor subfamily 1 group I member 3 (NR1I3) (Pusa sibirica (Baikal seal)).